Reading from the N-terminus, the 185-residue chain is Elongation factor P 1 (185 aa).

It belongs to the elongation factor P family.

The protein resides in the cytoplasm. It participates in protein biosynthesis; polypeptide chain elongation. Involved in peptide bond synthesis. Stimulates efficient translation and peptide-bond synthesis on native or reconstituted 70S ribosomes in vitro. Probably functions indirectly by altering the affinity of the ribosome for aminoacyl-tRNA, thus increasing their reactivity as acceptors for peptidyl transferase. This chain is Elongation factor P 1 (efp1), found in Chlamydia trachomatis serovar D (strain ATCC VR-885 / DSM 19411 / UW-3/Cx).